Consider the following 919-residue polypeptide: Alanine--tRNA ligase (919 aa).

Residues histidine 565, histidine 569, cysteine 667, and histidine 671 each contribute to the Zn(2+) site.

It belongs to the class-II aminoacyl-tRNA synthetase family. Requires Zn(2+) as cofactor.

It localises to the cytoplasm. It carries out the reaction tRNA(Ala) + L-alanine + ATP = L-alanyl-tRNA(Ala) + AMP + diphosphate. Its function is as follows. Catalyzes the attachment of alanine to tRNA(Ala) in a two-step reaction: alanine is first activated by ATP to form Ala-AMP and then transferred to the acceptor end of tRNA(Ala). Also edits incorrectly charged Ser-tRNA(Ala) and Gly-tRNA(Ala) via its editing domain. The chain is Alanine--tRNA ligase from Leptospira biflexa serovar Patoc (strain Patoc 1 / Ames).